A 182-amino-acid polypeptide reads, in one-letter code: Mid1-interacting protein 1 (182 aa).

At methionine 1 the chain carries N-acetylmethionine. The tract at residues 55 to 75 is disordered; that stretch reads VGGSGGCLEERTTPAPSPGSA. Phosphoserine is present on residues serine 71, serine 74, and serine 78.

It belongs to the SPOT14 family. In terms of assembly, homodimer in the absence of THRSP. Heterodimer with THRSP. The homodimer interacts with ACACA and ACACB. Promotes polymerization of Acetyl-CoA carboxylase to form complexes that contain MID1IP1 and ACACA and/or ACACB. Interaction with THRSP interferes with ACACA binding. As to expression, during embryonic development, expressed mainly in the neuroepithelial midline, urogenital apparatus and digits. Detected in adult white fat, liver, heart, brain and kidney. Expressed at very low levels in lactating mammary gland.

The protein resides in the nucleus. It localises to the cytoplasm. It is found in the cytoskeleton. In terms of biological role, plays a role in the regulation of lipogenesis in liver. Up-regulates ACACA enzyme activity. Required for efficient lipid biosynthesis, including triacylglycerol, diacylglycerol and phospholipid. Involved in stabilization of microtubules. The chain is Mid1-interacting protein 1 (Mid1ip1) from Mus musculus (Mouse).